The primary structure comprises 1215 residues: DNA-directed RNA polymerase subunit beta' (1215 aa).

Cysteine 60, cysteine 62, cysteine 75, and cysteine 78 together coordinate Zn(2+). Mg(2+)-binding residues include aspartate 450, aspartate 452, and aspartate 454. Cysteine 818, cysteine 892, cysteine 899, and cysteine 902 together coordinate Zn(2+).

This sequence belongs to the RNA polymerase beta' chain family. In terms of assembly, the RNAP catalytic core consists of 2 alpha, 1 beta, 1 beta' and 1 omega subunit. When a sigma factor is associated with the core the holoenzyme is formed, which can initiate transcription. Requires Mg(2+) as cofactor. Zn(2+) serves as cofactor.

It carries out the reaction RNA(n) + a ribonucleoside 5'-triphosphate = RNA(n+1) + diphosphate. Functionally, DNA-dependent RNA polymerase catalyzes the transcription of DNA into RNA using the four ribonucleoside triphosphates as substrates. The sequence is that of DNA-directed RNA polymerase subunit beta' from Streptococcus suis (strain 98HAH33).